The primary structure comprises 501 residues: Phase 2 flagellin (501 aa).

The protein belongs to the bacterial flagellin family.

It is found in the secreted. It localises to the bacterial flagellum. Functionally, flagellin is the subunit protein which polymerizes to form the filaments of bacterial flagella. This is Phase 2 flagellin (fljB) from Salmonella abortus-equi.